Reading from the N-terminus, the 203-residue chain is MGAEKITSKIVEDANKNAEKILAEALNEKEAILTEAKEEASKKEQAIAKKGEKDAEMTKNRILAEARLSAKKKLLEEREKTIQLTLEKLEEDLVKLPQKEEYKDILLKLIISGVYSVGGGELELLLNKKDFEVIDDSTLWALEKEMEDRLKKVTVLKKGEAKSIIGGCIIKTADKTKVSDNSLEATFERNLDSVRAKIAEMLF.

Belongs to the V-ATPase E subunit family. In terms of assembly, has multiple subunits with at least A(3), B(3), C, D, E, F, H, I and proteolipid K(x).

It localises to the cell membrane. Its function is as follows. Component of the A-type ATP synthase that produces ATP from ADP in the presence of a proton gradient across the membrane. The polypeptide is A-type ATP synthase subunit E (Methanococcus maripaludis (strain C7 / ATCC BAA-1331)).